Consider the following 393-residue polypeptide: uncharacterized protein (393 aa).

Disordered regions lie at residues 77–118 and 259–296; these read DSNN…SIRP and INNN…DESN. Positions 79-92 are enriched in low complexity; the sequence is NNNNNNNNNNNNNN. Over residues 103 to 114 the composition is skewed to polar residues; sequence IRQSLSSPQQLV. A compositionally biased stretch (low complexity) spans 259–289; sequence INNNNNNNNNNSNNNNNNNNSNNNDNNNNIN.

This is an uncharacterized protein from Dictyostelium discoideum (Social amoeba).